The primary structure comprises 200 residues: NADH-quinone oxidoreductase subunit C (200 aa).

The protein belongs to the complex I 30 kDa subunit family. NDH-1 is composed of 14 different subunits. Subunits NuoB, C, D, E, F, and G constitute the peripheral sector of the complex.

The protein resides in the cell inner membrane. It carries out the reaction a quinone + NADH + 5 H(+)(in) = a quinol + NAD(+) + 4 H(+)(out). In terms of biological role, NDH-1 shuttles electrons from NADH, via FMN and iron-sulfur (Fe-S) centers, to quinones in the respiratory chain. The immediate electron acceptor for the enzyme in this species is believed to be ubiquinone. Couples the redox reaction to proton translocation (for every two electrons transferred, four hydrogen ions are translocated across the cytoplasmic membrane), and thus conserves the redox energy in a proton gradient. In Maricaulis maris (strain MCS10) (Caulobacter maris), this protein is NADH-quinone oxidoreductase subunit C.